The following is a 235-amino-acid chain: uncharacterized protein (235 aa).

Disordered stretches follow at residues 20 to 64 and 140 to 164; these read IHPN…LPIK and SQFFNNNNNNNNNNNNSNNNKNFDQ. 2 stretches are compositionally biased toward low complexity: residues 30 to 60 and 140 to 161; these read NNNNNINNNNNNNNNNNNNNNNNNNNNSNNN and SQFFNNNNNNNNNNNNSNNNKN. Positions 174-213 form a coiled coil; that stretch reads KYMEFLSDIEQLNSDLKESKDNLESISIEMVLLETRLKGL.

This is an uncharacterized protein from Dictyostelium discoideum (Social amoeba).